The sequence spans 905 residues: Cadherin-2B (905 aa).

The N-terminal stretch at 1 to 28 is a signal peptide; sequence MCRKQPFLLPTLLGILAALMLQQGPVEA. Positions 29–160 are excised as a propeptide; sequence FGGSRLCKTG…NSNGLQRQKR (132 aa). Cadherin domains lie at 161-268, 269-383, 384-498, 499-604, and 605-713; these read DWVI…RPEF, LHQI…PPEF, TAMT…NPYF, TPNP…DNAP, and YVYP…TTAP. The Extracellular portion of the chain corresponds to 161-723; it reads DWVIPPINVP…IIGTGLGTGA (563 aa). Glutamate 171 contributes to the Ca(2+) binding site. A glycan (N-linked (GlcNAc...) asparagine) is linked at asparagine 191. The Ca(2+) site is built by aspartate 227, glutamate 229, aspartate 260, methionine 261, asparagine 262, aspartate 263, and asparagine 264. An N-linked (GlcNAc...) asparagine glycan is attached at asparagine 274. Positions 294, 296, and 302 each coordinate Ca(2+). N-linked (GlcNAc...) asparagine glycosylation is present at asparagine 326. Residue aspartate 354 coordinates Ca(2+). Asparagine 403, asparagine 573, asparagine 623, asparagine 651, and asparagine 692 each carry an N-linked (GlcNAc...) asparagine glycan. The chain crosses the membrane as a helical span at residues 724–745; sequence IIAILLCIIILLTLVLMFVVWM. Residues 746 to 905 lie on the Cytoplasmic side of the membrane; sequence KRRDKERQAK…LADMYGGSDD (160 aa). Disordered stretches follow at residues 774 to 800 and 862 to 883; these read EEGGGEEDQDYDLSQLQQPDTMEPDTI and SGSTAGSLSSLNSSSSGGEQDY. Over residues 775-784 the composition is skewed to acidic residues; the sequence is EGGGEEDQDY. The segment covering 862–879 has biased composition (low complexity); the sequence is SGSTAGSLSSLNSSSSGG.

As to quaternary structure, homodimer (via extracellular region). Can also form heterodimers with other cadherins (via extracellular region). Dimerization occurs in trans, i.e. with a cadherin chain from another cell.

It is found in the cell membrane. Its subcellular location is the sarcolemma. The protein localises to the cell junction. The protein resides in the cell surface. It localises to the desmosome. It is found in the adherens junction. In terms of biological role, calcium-dependent cell adhesion protein; preferentially mediates homotypic cell-cell adhesion. Cadherins may thus contribute to the sorting of heterogeneous cell types, and thereby play an important role during embryonic development. Required for proper neurite branching. Required for pre- and postsynaptic organization. The sequence is that of Cadherin-2B (cdh2-b) from Xenopus laevis (African clawed frog).